The sequence spans 286 residues: Expansin-B4 (286 aa).

The N-terminal stretch at Met1 to Ala24 is a signal peptide. N-linked (GlcNAc...) asparagine glycans are attached at residues Asn28 and Asn44. One can recognise an Expansin-like EG45 domain in the interval Gly75–Leu181. Disulfide bonds link Cys78–Cys106, Cys109–Cys176, and Cys114–Cys120. An Expansin-like CBD domain is found at Val194–Ser281. N-linked (GlcNAc...) asparagine glycosylation is present at Asn257.

It belongs to the expansin family. Expansin B subfamily. As to expression, expressed in internodes.

It localises to the secreted. Its subcellular location is the cell wall. The protein resides in the membrane. In terms of biological role, may cause loosening and extension of plant cell walls by disrupting non-covalent bonding between cellulose microfibrils and matrix glucans. No enzymatic activity has been found. May be required for rapid internodal elongation in deepwater rice during submergence. The sequence is that of Expansin-B4 (EXPB4) from Oryza sativa subsp. japonica (Rice).